Here is a 326-residue protein sequence, read N- to C-terminus: MKNIAIIGASGYTGAQLTALIHAEADLTIQGLYVSENSLDKGKPLADLYPSYSHIALTLSPLSDDAKAKIVAEADAVVLATEHSVSLHLAAWFYSQGLAVFDLSGAYRFSDVAQYPKWYGFEHEYPEVLAKAVYGLAEWNAKEIAATKMIAVPGCYPTASLTALKPLASLLTSAYPVINAVSGVTGAGRKAQLHTSFCEVSLTPYGVLGHRHQPEIVTQLGQEVIFTPHLGNFKRGILATITVQLKPGTTTADVAAAYSVYDQAPLVTVKHNQFPKVDDVVLTPNCHLGWKFDENSGYLVVASAIDNLMKGAASQALQCIKIHFNL.

C155 is a catalytic residue.

Belongs to the NAGSA dehydrogenase family. Type 1 subfamily.

It is found in the cytoplasm. The enzyme catalyses N-acetyl-L-glutamate 5-semialdehyde + phosphate + NADP(+) = N-acetyl-L-glutamyl 5-phosphate + NADPH + H(+). The protein operates within amino-acid biosynthesis; L-arginine biosynthesis; N(2)-acetyl-L-ornithine from L-glutamate: step 3/4. In terms of biological role, catalyzes the NADPH-dependent reduction of N-acetyl-5-glutamyl phosphate to yield N-acetyl-L-glutamate 5-semialdehyde. This Shewanella baltica (strain OS223) protein is N-acetyl-gamma-glutamyl-phosphate reductase.